The following is a 7705-amino-acid chain: Copine family protein 2 (7705 aa).

9 disordered regions span residues 1–61, 269–360, 372–408, 464–492, 506–538, 560–614, 1301–1358, 4381–4427, and 6779–6800; these read MNDY…RHSE, KEGN…NNSQ, SERK…HQQP, GDRA…TSSV, STEP…TADG, DERA…QGPP, NRSE…DQQV, ELEP…RSES, and RDEH…GKFT. Positions 12 to 25 are enriched in low complexity; it reads SSQKSNNQKISNNS. The span at 269-282 shows a compositional bias: basic and acidic residues; sequence KEGNNPSCCRERGT. Positions 302–313 are enriched in low complexity; it reads STSTKVAVTSAS. The span at 318–336 shows a compositional bias: basic residues; it reads IKDHKKQLKKEKEKKKKMD. The span at 372 to 404 shows a compositional bias: basic and acidic residues; the sequence is SERKTAKQREQELLQRSERRSGGRTHSHEEYRR. Residues 522-532 show a composition bias toward polar residues; it reads ASLSSVQQKQP. The span at 560-587 shows a compositional bias: basic and acidic residues; sequence DERAKDFLRGDRSSRLSPQSERKNERQI. Polar residues predominate over residues 588 to 597; it reads QIRQQSSGPT. 2 stretches are compositionally biased toward basic and acidic residues: residues 598–611 and 1301–1335; these read NRRE…EKRQ and NRSE…HTSE. The segment covering 4397–4409 has biased composition (low complexity); sequence RQSRVYRSSSQVR. Composition is skewed to basic and acidic residues over residues 4411–4427 and 6779–6797; these read PSEE…RSES and RDEH…RDGG. One can recognise a VWFA domain in the interval 7475 to 7673; that stretch reads NLIFGIDYTK…FHKVMFNAPN (199 aa).

Belongs to the copine family. As to expression, expressed in body wall muscle.

This Caenorhabditis elegans protein is Copine family protein 2 (cpna-2).